We begin with the raw amino-acid sequence, 305 residues long: Ribosomal protein L11 methyltransferase (305 aa).

Positions 152, 173, 195, and 237 each coordinate S-adenosyl-L-methionine.

The protein belongs to the methyltransferase superfamily. PrmA family.

It localises to the cytoplasm. The catalysed reaction is L-lysyl-[protein] + 3 S-adenosyl-L-methionine = N(6),N(6),N(6)-trimethyl-L-lysyl-[protein] + 3 S-adenosyl-L-homocysteine + 3 H(+). In terms of biological role, methylates ribosomal protein L11. The chain is Ribosomal protein L11 methyltransferase from Hamiltonella defensa subsp. Acyrthosiphon pisum (strain 5AT).